We begin with the raw amino-acid sequence, 254 residues long: Probable phosphatase TTE1963 (254 aa).

Residues histidine 14, histidine 16, histidine 22, histidine 47, glutamate 80, histidine 108, histidine 139, aspartate 200, and histidine 202 each contribute to the Zn(2+) site.

This sequence belongs to the PHP family. The cofactor is Zn(2+).

The sequence is that of Probable phosphatase TTE1963 from Caldanaerobacter subterraneus subsp. tengcongensis (strain DSM 15242 / JCM 11007 / NBRC 100824 / MB4) (Thermoanaerobacter tengcongensis).